Reading from the N-terminus, the 388-residue chain is uncharacterized protein (388 aa).

Helical transmembrane passes span 18 to 38 (AAMFLNYLTIGIPLVMLPLYV), 42 to 62 (LHLSDLLIGIAVGSQFIATLL), 89 to 111 (ASGLLMLVSLIAHPVPLLAWAIL), 116 to 136 (VLLGIGESFILTGNLTWGMWL), 145 to 165 (VISWNGMATYGALAIGAPLGL), 171 to 191 (AGLALPALLVVLLPIIASGVI), 219 to 239 (TGLVLQGIGFATLSAFTALWF), 248 to 268 (GFAMTLFGIAFIAVRFFCAKF), 287 to 307 (TGLAVMWAAPSAGAALIGAAI), 341 to 361 (AFQDLAYGFTGPIAGLLTPFI), and 365 to 385 (QVFLLAAACALLGAAVVHLLL).

The protein belongs to the major facilitator superfamily. YfcJ family.

It is found in the cell inner membrane. This is an uncharacterized protein from Salmonella typhimurium (strain LT2 / SGSC1412 / ATCC 700720).